The chain runs to 100 residues: MDNIQTFFDQYVHLPSEISSKHDHAYIILILLSVILILLLLICNLCICYFIRQRRRRELIDYPSNTLQYIPFPRNVRKPYRTESGTSSSNRMMLPPRQHV.

Residues 78–100 (KPYRTESGTSSSNRMMLPPRQHV) form a disordered region.

This is an uncharacterized protein from Caenorhabditis elegans.